Reading from the N-terminus, the 1035-residue chain is Cell-division control histidine kinase PdhS (1035 aa).

An important for polar localization region spans residues 1–613 (MSGSYPFIDI…HADGSEEPVD (613 aa)). Positions 500–533 (QGLANTRAESETPVSETSSIEPVEPTPPVKTRSE) are disordered. The segment at 614–1035 (THLNAIAWRG…VFPPTRVLAD (422 aa)) is interaction with DivK. Residues 659-730 (HVEELKTILD…YLHGLSGNGV (72 aa)) form the PAS domain. The Histidine kinase domain occupies 802–1031 (RISHEIRTPL…VVEIVFPPTR (230 aa)). Position 805 is a phosphohistidine; by autocatalysis (H805).

In terms of assembly, interacts with DivK.

It localises to the cytoplasm. The enzyme catalyses ATP + protein L-histidine = ADP + protein N-phospho-L-histidine.. Functionally, functions as a polar differentiation marker. Essential protein that, by localizing in the old pole of dividing cells, controls cell division and maturation, probably through control of DivK phosphorylation status and cellular distribution, which in turn regulates CtrA, a transcriptional regulator of the minB operon. The asymmetrical localization of this protein is probably required for cells to enter a new division cycle. This Brucella suis (strain ATCC 23445 / NCTC 10510) protein is Cell-division control histidine kinase PdhS (pdhS).